Here is a 128-residue protein sequence, read N- to C-terminus: Large ribosomal subunit protein bL17 (128 aa).

Belongs to the bacterial ribosomal protein bL17 family. Part of the 50S ribosomal subunit. Contacts protein L32.

The chain is Large ribosomal subunit protein bL17 from Streptococcus mutans serotype c (strain ATCC 700610 / UA159).